We begin with the raw amino-acid sequence, 468 residues long: Malate-2H(+)/Na(+)-lactate antiporter (468 aa).

A run of 12 helical transmembrane segments spans residues 9 to 29, 30 to 50, 73 to 93, 96 to 116, 136 to 156, 192 to 212, 233 to 253, 258 to 278, 309 to 329, 357 to 377, 405 to 425, and 428 to 448; these read LFEIIIVLGVFLALVLSFTVF, LDLPIQLALFVSWFIAMLLGI, AVLILVSVGALIGTWIAGGVV, LIYYGLEFIHPSIFLLATLII, IAMIAIGEGLGIPLPLVAGAI, LYLSIPAYVITAILFTVVGFM, TFDIHIWMLIPAVLVIVLLAM, MPVIVIGALLGAIWAVVFQGM, IVGMLDSLVVIIFGLGFGGLL, LIVAFLANIFGCAMYVSLILT, LTSGMVPWSDNGIYMAGILGV, and FSYLPFMWLSFVAIGLAIIYG.

Belongs to the NhaC Na(+)/H(+) (TC 2.A.35) antiporter family.

The protein localises to the cell membrane. Couples proton uptake and Na(+) efflux to the substrate-product malate/lactate antiport, in an electroneutral malate-2H(+)/Na(+)-lactate exchange. Plays a role in supporting growth to high density on malate at reduced protonmotive force. This chain is Malate-2H(+)/Na(+)-lactate antiporter (mleN), found in Bacillus subtilis (strain 168).